We begin with the raw amino-acid sequence, 246 residues long: MKLTPELLSRSSSSINTLRDRELDLRGLKIPAIENLGVTRDQNDAIDLTDNDIRYLGNFPLLQQLKTLQLANNLISRIDPRIGHSLPALHSLNLTNNCISDLSELVHLSKCRRLEYLCLMGTPASREAQYREFVIWKLPQVRVLDYQRIKDKERARAKDLMETEDGRPTALAANILKKLGASAMDVDVDVMVGKQKTFEPGRLNGSSRRLLTAEERKAIEDAIESSESLEEIRKLEEQLKMGHTFV.

LRR repeat units lie at residues 19 to 40, 42 to 63, 64 to 85, and 88 to 109; these read RDRELDLRGLKIPAIENLGVTR, QNDAIDLTDNDIRYLGNFPLLQ, QLKTLQLANNLISRIDPRIGHS, and ALHSLNLTNNCISDLSELVHLS. The 39-residue stretch at 122–160 folds into the LRRCT domain; it reads TPASREAQYREFVIWKLPQVRVLDYQRIKDKERARAKDL.

Belongs to the U2 small nuclear ribonucleoprotein A family. As to quaternary structure, associated with the spliceosome.

It localises to the nucleus. Its function is as follows. Involved in pre-mRNA splicing. This is U2 small nuclear ribonucleoprotein A' (LEA1) from Mycosarcoma maydis (Corn smut fungus).